The chain runs to 687 residues: Chloride channel protein ClC-Kb (687 aa).

Residues 1–50 (MEEIVGLREGSPRKPVPLQELWRPCPRIRRNIQGSLEWLKERLFRVGEDW) lie on the Cytoplasmic side of the membrane. Transmembrane regions (helical) follow at residues 51–82 (YFLVALGVLMALISYAMNFAIGRVVRAHKWLY) and 91–111 (LRYLSWTVYPVALLSFSSGFS). An intramembrane region (helical) is located at residues 116-127 (PSSGGSGIPEVK). Ser-121 contacts chloride. The next 2 membrane-spanning stretches (helical) occupy residues 141–160 (IKNFGAKVVGLSCTLATGST) and 161–180 (IFLGKLGPFVHLSVMIAAYL). N-linked (GlcNAc...) asparagine glycosylation is present at Asn-193. An intramembrane region (helical) is located at residues 203–224 (AGAAVGVATVFAAPISGVLFSI). The chain crosses the membrane as a helical span at residues 236 to 255 (YWRGFFAATCGAFMFHLLAV). Ca(2+)-binding residues include Glu-259, Glu-261, Asp-278, and Glu-281. 2 helical membrane passes run 282 to 310 (IFFFVALGAICGILSCGYNYCQRTSLFFL) and 325 to 342 (PLYSALAAVVLASITYPP). Residues 349 to 360 (ASRLSMSEYLET) constitute an intramembrane region (helical). The next 2 membrane-spanning stretches (helical) occupy residues 400–420 (GTLVFFLVMKFWMLILATTIP) and 421–440 (IPAGYFLPIFVYGAAIGRLF). Phe-426 serves as a coordination point for chloride. Positions 464 to 496 (GAYALAGAAAFSGAVTHTLSTALLAFEVSGQIV) form an intramembrane region, helical. A helical transmembrane segment spans residues 500–520 (PVLMAVLAANAICQSYQPSFY). The Cytoplasmic portion of the chain corresponds to 521 to 687 (DGTIIVKKLP…STLTNPPAPK (167 aa)). CBS domains lie at 551–609 (MNCT…DSAS) and 626–687 (CPTQ…PAPK).

The protein belongs to the chloride channel (TC 2.A.49) family. CLCNKB subfamily. In terms of assembly, homodimer. Interacts with BSND. In terms of processing, N-glycosylated. In terms of tissue distribution, expressed predominantly in the kidney. Expressed in all segments of the nephron examined, including the S2 segment and the glomerulus.

The protein resides in the basolateral cell membrane. It catalyses the reaction chloride(in) = chloride(out). The enzyme catalyses iodide(out) = iodide(in). The catalysed reaction is nitrate(in) = nitrate(out). It carries out the reaction bromide(in) = bromide(out). In terms of biological role, anion-selective channel permeable to small monovalent anions with ion selectivity for chloride &gt; bromide &gt; nitrate &gt; iodide. Forms a homodimeric channel where each subunit has its own ion conduction pathway. May conduct double-barreled currents controlled by two types of gates, two fast gates that control each subunit independently and a slow common gate that opens and shuts off both subunits simultaneously. Assembles with the regulatory subunit BSND/Barttin for sorting at the basolateral plasma membrane domain and functional switch to the ion conducting state. CLCNKB:BSND channels display mostly a linear current-voltage relationship controlled by common gate. Mediates chloride conductance along nephron segments, namely the thick ascending limb of Henle's loop, convoluted tubule and the collecting duct, contributing to the maintenance of systemic acid-base and electrolyte homeostasis. Conducts chloride currents in the stria vascularis of the inner ear to establish the endocochlear potential necessary for normal hearing. This is Chloride channel protein ClC-Kb from Rattus norvegicus (Rat).